The sequence spans 124 residues: ATP synthase epsilon chain (124 aa).

The tract at residues 97-124 (ARVREASSEEEKSRAESELRAVKRSKEK) is disordered.

The protein belongs to the ATPase epsilon chain family. In terms of assembly, F-type ATPases have 2 components, CF(1) - the catalytic core - and CF(0) - the membrane proton channel. CF(1) has five subunits: alpha(3), beta(3), gamma(1), delta(1), epsilon(1). CF(0) has three main subunits: a, b and c.

It is found in the cell membrane. Functionally, produces ATP from ADP in the presence of a proton gradient across the membrane. This is ATP synthase epsilon chain from Corynebacterium urealyticum (strain ATCC 43042 / DSM 7109).